A 175-amino-acid polypeptide reads, in one-letter code: MQPKNCTILKKSKQELFPCQTFILLTGKVKNTDSLFYQTVFRSCPLKYWLLQAGVSMLINRSDSTNLVVQARGLKFTNCSISQRTVLRQGLKRQSITTKESSCFLLWEELSKSEEVNSSLLFHTSWLMVTCCLKYIYMYDICTCFLFCAFVTSIFIETDYSIFFLLTASRGIAQF.

The chain crosses the membrane as a helical span at residues 143–166 (TCFLFCAFVTSIFIETDYSIFFLL).

The protein localises to the membrane. This is an uncharacterized protein from Saccharomyces cerevisiae (strain ATCC 204508 / S288c) (Baker's yeast).